Reading from the N-terminus, the 120-residue chain is NAD(P)H-quinone oxidoreductase subunit 3 (120 aa).

3 helical membrane-spanning segments follow: residues 6 to 26 (GYDA…LALV), 64 to 84 (MFAL…PWAV), and 89 to 109 (LGLL…VALA).

It belongs to the complex I subunit 3 family. NDH-1 can be composed of about 15 different subunits; different subcomplexes with different compositions have been identified which probably have different functions.

The protein resides in the cellular thylakoid membrane. It carries out the reaction a plastoquinone + NADH + (n+1) H(+)(in) = a plastoquinol + NAD(+) + n H(+)(out). The enzyme catalyses a plastoquinone + NADPH + (n+1) H(+)(in) = a plastoquinol + NADP(+) + n H(+)(out). Its function is as follows. NDH-1 shuttles electrons from an unknown electron donor, via FMN and iron-sulfur (Fe-S) centers, to quinones in the respiratory and/or the photosynthetic chain. The immediate electron acceptor for the enzyme in this species is believed to be plastoquinone. Couples the redox reaction to proton translocation, and thus conserves the redox energy in a proton gradient. Cyanobacterial NDH-1 also plays a role in inorganic carbon-concentration. This is NAD(P)H-quinone oxidoreductase subunit 3 from Synechococcus sp. (strain WH7803).